A 507-amino-acid chain; its full sequence is Cytochrome P450 3A28 (507 aa).

Cys-442 contributes to the heme binding site.

This sequence belongs to the cytochrome P450 family. It depends on heme as a cofactor.

The protein localises to the endoplasmic reticulum membrane. It is found in the microsome membrane. It carries out the reaction an organic molecule + reduced [NADPH--hemoprotein reductase] + O2 = an alcohol + oxidized [NADPH--hemoprotein reductase] + H2O + H(+). Functionally, cytochromes P450 are a group of heme-thiolate monooxygenases. In liver microsomes, this enzyme is involved in an NADPH-dependent electron transport pathway. It oxidizes a variety of structurally unrelated compounds, including steroids, fatty acids, and xenobiotics. The sequence is that of Cytochrome P450 3A28 (CYP3A28) from Bos taurus (Bovine).